A 445-amino-acid polypeptide reads, in one-letter code: Chromosome partition protein MukF (445 aa).

The tract at residues 213–241 is leucine-zipper; sequence LSETSATLRELQDTLQAAGDELQTQILDI.

Belongs to the MukF family. In terms of assembly, interacts, and probably forms a ternary complex, with MukE and MukB via its C-terminal region. The complex formation is stimulated by calcium or magnesium. It is required for an interaction between MukE and MukB.

The protein resides in the cytoplasm. It is found in the nucleoid. Functionally, involved in chromosome condensation, segregation and cell cycle progression. May participate in facilitating chromosome segregation by condensation DNA from both sides of a centrally located replisome during cell division. Not required for mini-F plasmid partitioning. Probably acts via its interaction with MukB and MukE. Overexpression results in anucleate cells. It has a calcium binding activity. The sequence is that of Chromosome partition protein MukF from Vibrio cholerae serotype O1 (strain ATCC 39541 / Classical Ogawa 395 / O395).